The chain runs to 449 residues: UDP-N-acetylglucosamine 1-carboxyvinyltransferase (449 aa).

Residue 51–52 (KN) participates in phosphoenolpyruvate binding. R121 is a binding site for UDP-N-acetyl-alpha-D-glucosamine. C145 (proton donor) is an active-site residue. At C145 the chain carries 2-(S-cysteinyl)pyruvic acid O-phosphothioketal. UDP-N-acetyl-alpha-D-glucosamine contacts are provided by residues 150–154 (RPVDQ), D333, and I355.

This sequence belongs to the EPSP synthase family. MurA subfamily.

It is found in the cytoplasm. It carries out the reaction phosphoenolpyruvate + UDP-N-acetyl-alpha-D-glucosamine = UDP-N-acetyl-3-O-(1-carboxyvinyl)-alpha-D-glucosamine + phosphate. It participates in cell wall biogenesis; peptidoglycan biosynthesis. Its function is as follows. Cell wall formation. Adds enolpyruvyl to UDP-N-acetylglucosamine. This Burkholderia lata (strain ATCC 17760 / DSM 23089 / LMG 22485 / NCIMB 9086 / R18194 / 383) protein is UDP-N-acetylglucosamine 1-carboxyvinyltransferase.